Reading from the N-terminus, the 410-residue chain is Sensor-like histidine kinase SenX3 (410 aa).

2 helical membrane passes run 6–26 and 46–66; these read ALLLAGVLSALALAVGGAVGM and ITVSQMLQCIVTLMPLGAAVV. The 217-residue stretch at 164–380 folds into the Histidine kinase domain; the sequence is NVSHELKTPV…TFTLALPALI (217 aa). At His167 the chain carries Phosphohistidine; by autocatalysis. Positions 385–410 are disordered; that stretch reads DDERPEQAREPELRSNRSQREEELSR.

Post-translationally, autophosphorylated.

Its subcellular location is the cell membrane. It carries out the reaction ATP + protein L-histidine = ADP + protein N-phospho-L-histidine.. Member of the two-component regulatory system SenX3/RegX3. Autophosphorylates, and then transfers the phosphate group to RegX3. The sequence is that of Sensor-like histidine kinase SenX3 from Mycobacterium bovis (strain ATCC BAA-935 / AF2122/97).